A 156-amino-acid polypeptide reads, in one-letter code: Ribosomal RNA large subunit methyltransferase H (156 aa).

Residues Leu73, Gly104, and 123-128 (VSSLTL) each bind S-adenosyl-L-methionine.

This sequence belongs to the RNA methyltransferase RlmH family. Homodimer.

The protein resides in the cytoplasm. It catalyses the reaction pseudouridine(1915) in 23S rRNA + S-adenosyl-L-methionine = N(3)-methylpseudouridine(1915) in 23S rRNA + S-adenosyl-L-homocysteine + H(+). In terms of biological role, specifically methylates the pseudouridine at position 1915 (m3Psi1915) in 23S rRNA. The polypeptide is Ribosomal RNA large subunit methyltransferase H (Burkholderia thailandensis (strain ATCC 700388 / DSM 13276 / CCUG 48851 / CIP 106301 / E264)).